The sequence spans 218 residues: Small ribosomal subunit protein uS5 (218 aa).

The region spanning 66 to 129 (LKQELLNVNL…REAKLNLVPV (64 aa)) is the S5 DRBM domain.

The protein belongs to the universal ribosomal protein uS5 family. In terms of assembly, part of the 30S ribosomal subunit. Contacts protein S4.

Its function is as follows. With S4 and S12 plays an important role in translational accuracy. The chain is Small ribosomal subunit protein uS5 from Pyrobaculum aerophilum (strain ATCC 51768 / DSM 7523 / JCM 9630 / CIP 104966 / NBRC 100827 / IM2).